Consider the following 289-residue polypeptide: Paired box protein 5 homolog (289 aa).

A DNA-binding region (paired) is located at residues 29 to 155 (SHTGVNQLGG…SSINRIVRNK (127 aa)). A PAI subdomain region spans residues 32-88 (GVNQLGGVFVNGRPLADTVRAQIVEMSQHGTRPCDISRQLKVSHGCVSKILGRYYST). Residues 107 to 155 (RVVECIAGYKRANPTMFAWEIRQKLIEDQICGEENVPSVSSINRIVRNK) are RED subdomain. Low complexity-rich tracts occupy residues 166–179 (SVTS…SATS) and 189–198 (VQQHMQQSTS). The tract at residues 166–198 (SVTSSAARPSSATSHHQRSPPRGVQQHMQQSTS) is disordered.

It localises to the nucleus. Its subcellular location is the chromosome. Transcription factor. Binds to specific DNA sequence motifs in regulatory elements, for example in the genes encoding transcription factor lin-48, apoptosis regulator ced-9 and neuropeptide-like protein nlp-2. Specifies cell fate, playing an essential role in embryonic and larval development. Involved in morphogenesis of the vulva and uterus in hermaphrodites and of the rectal epithelium of the tail in males. Plays multiple roles in the development of the egg-laying system, acting in both lin-3/EGF-pathway-dependent and -independent processes. Positively regulates expression of neuropeptide-like proteins nlp-2 and nlp-7 in uvl cells in an EGF-pathway-dependent manner. Involved in negatively modulating apoptosis in germline and somatic cells, acting in partial redundancy with transcription factor pax-2, probably by directly regulating transcription of ced-9. Positively regulates transcription of lin-48 in hindgut cells and functions in the development of the hindgut. This Caenorhabditis elegans protein is Paired box protein 5 homolog.